Here is a 213-residue protein sequence, read N- to C-terminus: uncharacterized protein (213 aa).

The signal sequence occupies residues Met-1–Ala-19. Cys-20 carries the N-palmitoyl cysteine lipid modification. Cys-20 is lipidated: S-diacylglycerol cysteine. A disordered region spans residues Cys-20–Gln-62. The segment covering Ala-26 to Gln-62 has biased composition (basic and acidic residues).

The protein localises to the cell membrane. This is an uncharacterized protein from Bacillus subtilis (strain 168).